Consider the following 194-residue polypeptide: ATP-dependent Clp protease proteolytic subunit (194 aa).

The active-site Nucleophile is serine 97. The active site involves histidine 122.

It belongs to the peptidase S14 family. As to quaternary structure, fourteen ClpP subunits assemble into 2 heptameric rings which stack back to back to give a disk-like structure with a central cavity, resembling the structure of eukaryotic proteasomes.

It localises to the cytoplasm. It carries out the reaction Hydrolysis of proteins to small peptides in the presence of ATP and magnesium. alpha-casein is the usual test substrate. In the absence of ATP, only oligopeptides shorter than five residues are hydrolyzed (such as succinyl-Leu-Tyr-|-NHMec, and Leu-Tyr-Leu-|-Tyr-Trp, in which cleavage of the -Tyr-|-Leu- and -Tyr-|-Trp bonds also occurs).. Its function is as follows. Cleaves peptides in various proteins in a process that requires ATP hydrolysis. Has a chymotrypsin-like activity. Plays a major role in the degradation of misfolded proteins. The sequence is that of ATP-dependent Clp protease proteolytic subunit from Campylobacter jejuni subsp. jejuni serotype O:23/36 (strain 81-176).